Reading from the N-terminus, the 772-residue chain is Bromo adjacent homology domain-containing 1 protein (772 aa).

2 disordered regions span residues 1-63 (MTHT…RSLV) and 77-117 (LENV…PRKR). Ser8 carries the post-translational modification Phosphoserine. Over residues 49–61 (TGRRKNYPLRKRS) the composition is skewed to basic residues. Ser101 and Ser121 each carry phosphoserine. Disordered stretches follow at residues 131 to 357 (LLER…PADY), 521 to 582 (QTVA…RTNG), and 723 to 743 (PSRK…PHRT). 3 stretches are compositionally biased toward basic and acidic residues: residues 147–158 (RGGDPHRSRDRA), 170–182 (RLGD…RDLS), and 189–199 (EGARRDGDPAP). Ser182 carries the phosphoserine modification. Ser204 carries the post-translational modification Phosphoserine. The segment covering 280–289 (SAPPHGPPTQ) has biased composition (pro residues). Residues 299–310 (LENPLRPNLPLL) show a composition bias toward low complexity. Residues 340 to 352 (FPAPQLSPLPMPG) show a composition bias toward pro residues. A compositionally biased stretch (polar residues) spans 536 to 548 (GSKSGLRTGSSCR). Over residues 549-580 (HTVRSKAARRPSHPKQPRAQRPRPRRRRRRRT) the composition is skewed to basic residues. Position 580 is a phosphothreonine (Thr580). The 156-residue stretch at 616 to 771 (ETIRVRDTVL…FRHGRILKNP (156 aa)) folds into the BAH domain.

As to quaternary structure, interacts with CBX5 (HP1 alpha), HDAC5, MBD1 and SP1. Post-translationally, ubiquitinated in a FBXO11-dependent manner; leading to degradation.

Its subcellular location is the nucleus. The protein localises to the chromosome. Functionally, heterochromatin protein that acts as a transcription repressor and has the ability to promote the formation of large heterochromatic domains. May act by recruiting heterochromatin proteins such as CBX5 (HP1 alpha), HDAC5 and MBD1. Represses IGF2 expression by binding to its CpG-rich P3 promoter and recruiting heterochromatin proteins. This chain is Bromo adjacent homology domain-containing 1 protein (Bahd1), found in Mus musculus (Mouse).